Here is a 201-residue protein sequence, read N- to C-terminus: Small ribosomal subunit protein uS4c (201 aa).

A disordered region spans residues 20 to 44 (GLTSKRPRAGSDLRNQSRSGKKSQY). An S4 RNA-binding domain is found at 89–152 (MRLDNILFRL…NSRTLVQNLL (64 aa)).

It belongs to the universal ribosomal protein uS4 family. In terms of assembly, part of the 30S ribosomal subunit. Contacts protein S5. The interaction surface between S4 and S5 is involved in control of translational fidelity.

The protein localises to the plastid. The protein resides in the chloroplast. Its function is as follows. One of the primary rRNA binding proteins, it binds directly to 16S rRNA where it nucleates assembly of the body of the 30S subunit. In terms of biological role, with S5 and S12 plays an important role in translational accuracy. This chain is Small ribosomal subunit protein uS4c (rps4), found in Aethionema cordifolium (Lebanon stonecress).